The primary structure comprises 204 residues: Holliday junction branch migration complex subunit RuvA (204 aa).

The segment at 1 to 63 is domain I; it reads MIGKLSGKAD…EEHIHLYGFL (63 aa). The tract at residues 64–142 is domain II; it reads TLEEKNFFNL…KISSSSAIKD (79 aa). Residues 143 to 153 are flexible linker; it reads SLNIKNITPVT. Residues 153–204 are domain III; it reads TSNEVMKALINLGFSRFEAQNVVQGIITQNPKISIDELIKTALKNRNSKFFS.

This sequence belongs to the RuvA family. As to quaternary structure, homotetramer. Forms an RuvA(8)-RuvB(12)-Holliday junction (HJ) complex. HJ DNA is sandwiched between 2 RuvA tetramers; dsDNA enters through RuvA and exits via RuvB. An RuvB hexamer assembles on each DNA strand where it exits the tetramer. Each RuvB hexamer is contacted by two RuvA subunits (via domain III) on 2 adjacent RuvB subunits; this complex drives branch migration. In the full resolvosome a probable DNA-RuvA(4)-RuvB(12)-RuvC(2) complex forms which resolves the HJ.

Its subcellular location is the cytoplasm. Functionally, the RuvA-RuvB-RuvC complex processes Holliday junction (HJ) DNA during genetic recombination and DNA repair, while the RuvA-RuvB complex plays an important role in the rescue of blocked DNA replication forks via replication fork reversal (RFR). RuvA specifically binds to HJ cruciform DNA, conferring on it an open structure. The RuvB hexamer acts as an ATP-dependent pump, pulling dsDNA into and through the RuvAB complex. HJ branch migration allows RuvC to scan DNA until it finds its consensus sequence, where it cleaves and resolves the cruciform DNA. In Rickettsia canadensis (strain McKiel), this protein is Holliday junction branch migration complex subunit RuvA.